The chain runs to 818 residues: Glycerol-3-phosphate acyltransferase (818 aa).

Residues C308 to M313 carry the HXXXXD motif motif.

This sequence belongs to the GPAT/DAPAT family.

Its subcellular location is the cell inner membrane. It carries out the reaction sn-glycerol 3-phosphate + an acyl-CoA = a 1-acyl-sn-glycero-3-phosphate + CoA. Its pathway is phospholipid metabolism; CDP-diacylglycerol biosynthesis; CDP-diacylglycerol from sn-glycerol 3-phosphate: step 1/3. The chain is Glycerol-3-phosphate acyltransferase from Alteromonas mediterranea (strain DSM 17117 / CIP 110805 / LMG 28347 / Deep ecotype).